Here is a 138-residue protein sequence, read N- to C-terminus: MKKVLALIVAATMGLSSVAFAADAVAPAAAAPAATTTAAPAAAATKAPAKATHHKKAHKKAPAQKAQAAKKHHKATKKAPAQKAQAAKKHHKATKAAPAQKAQAAKKHHKATKPAAAQKAQAAKKHHKATKKAAPAAK.

Positions 1-21 (MKKVLALIVAATMGLSSVAFA) are cleaved as a signal peptide. Residues 22–85 (ADAVAPAAAA…TKKAPAQKAQ (64 aa)) constitute a propeptide that is removed on maturation. Low complexity predominate over residues 31-50 (APAATTTAAPAAAATKAPAK). The disordered stretch occupies residues 31–138 (APAATTTAAP…ATKKAAPAAK (108 aa)). Basic residues-rich tracts occupy residues 51–77 (ATHH…KATK) and 122–131 (AAKKHHKATK).

The protein belongs to the Asr family. In terms of processing, proteolytic processing gives rise to the active protein.

The protein localises to the periplasm. Required for growth and/or survival at acidic conditions. The sequence is that of Acid shock protein from Serratia proteamaculans (strain 568).